We begin with the raw amino-acid sequence, 175 residues long: Pancreatic beta cell growth factor (175 aa).

The N-terminal stretch at 1-26 (MMLPMTLCRMSWMLLSCLMFLSWVEG) is a signal peptide. Positions 38 to 175 (ITCPQGSVAY…ELPYICKFKV (138 aa)) constitute a C-type lectin domain. Cystine bridges form between Cys40–Cys51, Cys68–Cys171, and Cys146–Cys163.

In terms of tissue distribution, expressed only in CW animals pancreas and to a lesser extent in duodenum. In pancreas it is found in acinar cells, but not in islets.

It localises to the secreted. Functionally, constituent of ilotropin, which is a partially purified preparation of cellophane wrapping (CW) pancreata. Capable of initiating duct cell proliferation, a prerequisite for islet neogenesis. The protein is Pancreatic beta cell growth factor (INGAP) of Mesocricetus auratus (Golden hamster).